A 603-amino-acid chain; its full sequence is UvrABC system protein C (603 aa).

The 78-residue stretch at 15 to 92 (DQPGCYLMKD…IKKHDPRFNI (78 aa)) folds into the GIY-YIG domain. The 36-residue stretch at 197-232 (KTVKNDLMKKMQEAAENMEFEKAGEFRDQINAIETT) folds into the UVR domain.

The protein belongs to the UvrC family. Interacts with UvrB in an incision complex.

It localises to the cytoplasm. In terms of biological role, the UvrABC repair system catalyzes the recognition and processing of DNA lesions. UvrC both incises the 5' and 3' sides of the lesion. The N-terminal half is responsible for the 3' incision and the C-terminal half is responsible for the 5' incision. The chain is UvrABC system protein C from Listeria monocytogenes serotype 4b (strain CLIP80459).